Reading from the N-terminus, the 1034-residue chain is Probable isoleucine--tRNA ligase, mitochondrial (1034 aa).

The transit peptide at 1-32 (MISLNNSFFNKRVIVNSFNNYKRSFGTKSQNE) directs the protein to the mitochondrion. The short motif at 94-104 (PYANGDLHMGH) is the 'HIGH' region element. A 'KMSKS' region motif is present at residues 655–659 (KMSKS). An ATP-binding site is contributed by Lys-658.

This sequence belongs to the class-I aminoacyl-tRNA synthetase family.

It localises to the mitochondrion matrix. The catalysed reaction is tRNA(Ile) + L-isoleucine + ATP = L-isoleucyl-tRNA(Ile) + AMP + diphosphate. The protein is Probable isoleucine--tRNA ligase, mitochondrial (mileS) of Dictyostelium discoideum (Social amoeba).